The sequence spans 469 residues: UDP-N-acetylmuramate--L-alanine ligase (469 aa).

112-118 (GTHGKTT) is a binding site for ATP.

Belongs to the MurCDEF family.

The protein localises to the cytoplasm. It catalyses the reaction UDP-N-acetyl-alpha-D-muramate + L-alanine + ATP = UDP-N-acetyl-alpha-D-muramoyl-L-alanine + ADP + phosphate + H(+). The protein operates within cell wall biogenesis; peptidoglycan biosynthesis. Functionally, cell wall formation. The chain is UDP-N-acetylmuramate--L-alanine ligase from Laribacter hongkongensis (strain HLHK9).